The sequence spans 638 residues: 1-deoxy-D-xylulose-5-phosphate synthase (638 aa).

Thiamine diphosphate-binding positions include His-78 and Ala-119–Ser-121. A Mg(2+)-binding site is contributed by Asp-150. Thiamine diphosphate contacts are provided by residues Gly-151–Ser-152, Asn-179, Tyr-288, and Glu-370. Asn-179 contributes to the Mg(2+) binding site.

This sequence belongs to the transketolase family. DXPS subfamily. As to quaternary structure, homodimer. Mg(2+) serves as cofactor. It depends on thiamine diphosphate as a cofactor.

It carries out the reaction D-glyceraldehyde 3-phosphate + pyruvate + H(+) = 1-deoxy-D-xylulose 5-phosphate + CO2. It functions in the pathway metabolic intermediate biosynthesis; 1-deoxy-D-xylulose 5-phosphate biosynthesis; 1-deoxy-D-xylulose 5-phosphate from D-glyceraldehyde 3-phosphate and pyruvate: step 1/1. Its function is as follows. Catalyzes the acyloin condensation reaction between C atoms 2 and 3 of pyruvate and glyceraldehyde 3-phosphate to yield 1-deoxy-D-xylulose-5-phosphate (DXP). This Brucella anthropi (strain ATCC 49188 / DSM 6882 / CCUG 24695 / JCM 21032 / LMG 3331 / NBRC 15819 / NCTC 12168 / Alc 37) (Ochrobactrum anthropi) protein is 1-deoxy-D-xylulose-5-phosphate synthase.